The primary structure comprises 31 residues: Cytochrome b6-f complex subunit 6 (31 aa).

A helical membrane pass occupies residues 3 to 23 (IITSYFGFLLTALTIASALFI).

Belongs to the PetL family. The 4 large subunits of the cytochrome b6-f complex are cytochrome b6, subunit IV (17 kDa polypeptide, PetD), cytochrome f and the Rieske protein, while the 4 small subunits are PetG, PetL, PetM and PetN. The complex functions as a dimer.

It is found in the plastid. Its subcellular location is the chloroplast thylakoid membrane. Functionally, component of the cytochrome b6-f complex, which mediates electron transfer between photosystem II (PSII) and photosystem I (PSI), cyclic electron flow around PSI, and state transitions. PetL is important for photoautotrophic growth as well as for electron transfer efficiency and stability of the cytochrome b6-f complex. This chain is Cytochrome b6-f complex subunit 6, found in Helianthus annuus (Common sunflower).